The sequence spans 245 residues: Uracil-DNA glycosylase (245 aa).

The active-site Proton acceptor is Asp-82.

Belongs to the uracil-DNA glycosylase (UDG) superfamily. UNG family.

The protein resides in the cytoplasm. The catalysed reaction is Hydrolyzes single-stranded DNA or mismatched double-stranded DNA and polynucleotides, releasing free uracil.. Functionally, excises uracil residues from the DNA which can arise as a result of misincorporation of dUMP residues by DNA polymerase or due to deamination of cytosine. This Deinococcus geothermalis (strain DSM 11300 / CIP 105573 / AG-3a) protein is Uracil-DNA glycosylase.